The primary structure comprises 885 residues: Leucine--tRNA ligase (885 aa).

Residues 48 to 58 (PYPSGKLHMGH) carry the 'HIGH' region motif. The 'KMSKS' region motif lies at 639-643 (TMSKS). Lys-642 serves as a coordination point for ATP.

It belongs to the class-I aminoacyl-tRNA synthetase family.

The protein localises to the cytoplasm. It catalyses the reaction tRNA(Leu) + L-leucine + ATP = L-leucyl-tRNA(Leu) + AMP + diphosphate. This is Leucine--tRNA ligase from Bordetella petrii (strain ATCC BAA-461 / DSM 12804 / CCUG 43448).